A 261-amino-acid polypeptide reads, in one-letter code: Cytochrome c oxidase subunit 3 (261 aa).

Over 1 to 15 (MTHQTHAYHMVNPSP) the chain is Mitochondrial matrix. The chain crosses the membrane as a helical span at residues 16-34 (WPLTGALSALLMTSGLAMW). Residues 35-40 (FHFNSP) lie on the Mitochondrial intermembrane side of the membrane. Residues 41 to 66 (SLLLIGLVTNTLTMYQWWRDIVREGT) traverse the membrane as a helical segment. Topologically, residues 67-72 (FQGHHT) are mitochondrial matrix. Residues 73 to 105 (PIVQKGLRYGMILFIISEVFFFAGFFWAFYHSS) form a helical membrane-spanning segment. Over 106-128 (LAPTPELGGCWPPTGINPLNPLE) the chain is Mitochondrial intermembrane. The chain crosses the membrane as a helical span at residues 129–152 (VPLLNTSVLLASGVSITWAHHSLM). At 153–155 (EGN) the chain is on the mitochondrial matrix side. A helical membrane pass occupies residues 156-183 (RKNMQQALAITILLGIYFTLLQASEYYE). Residues 184 to 190 (TSFTISD) are Mitochondrial intermembrane-facing. A helical transmembrane segment spans residues 191 to 223 (GVYGSTFFMATGFHGLHVIIGSTFLTVCLLRQF). At 224-232 (NFHFTSNHH) the chain is on the mitochondrial matrix side. A helical transmembrane segment spans residues 233 to 256 (FGFEAAAWYWHFVDVVWLFLYVSI). At 257 to 261 (YWWGS) the chain is on the mitochondrial intermembrane side.

The protein belongs to the cytochrome c oxidase subunit 3 family. In terms of assembly, component of the cytochrome c oxidase (complex IV, CIV), a multisubunit enzyme composed of 14 subunits. The complex is composed of a catalytic core of 3 subunits MT-CO1, MT-CO2 and MT-CO3, encoded in the mitochondrial DNA, and 11 supernumerary subunits COX4I, COX5A, COX5B, COX6A, COX6B, COX6C, COX7A, COX7B, COX7C, COX8 and NDUFA4, which are encoded in the nuclear genome. The complex exists as a monomer or a dimer and forms supercomplexes (SCs) in the inner mitochondrial membrane with NADH-ubiquinone oxidoreductase (complex I, CI) and ubiquinol-cytochrome c oxidoreductase (cytochrome b-c1 complex, complex III, CIII), resulting in different assemblies (supercomplex SCI(1)III(2)IV(1) and megacomplex MCI(2)III(2)IV(2)).

It localises to the mitochondrion inner membrane. It catalyses the reaction 4 Fe(II)-[cytochrome c] + O2 + 8 H(+)(in) = 4 Fe(III)-[cytochrome c] + 2 H2O + 4 H(+)(out). In terms of biological role, component of the cytochrome c oxidase, the last enzyme in the mitochondrial electron transport chain which drives oxidative phosphorylation. The respiratory chain contains 3 multisubunit complexes succinate dehydrogenase (complex II, CII), ubiquinol-cytochrome c oxidoreductase (cytochrome b-c1 complex, complex III, CIII) and cytochrome c oxidase (complex IV, CIV), that cooperate to transfer electrons derived from NADH and succinate to molecular oxygen, creating an electrochemical gradient over the inner membrane that drives transmembrane transport and the ATP synthase. Cytochrome c oxidase is the component of the respiratory chain that catalyzes the reduction of oxygen to water. Electrons originating from reduced cytochrome c in the intermembrane space (IMS) are transferred via the dinuclear copper A center (CU(A)) of subunit 2 and heme A of subunit 1 to the active site in subunit 1, a binuclear center (BNC) formed by heme A3 and copper B (CU(B)). The BNC reduces molecular oxygen to 2 water molecules using 4 electrons from cytochrome c in the IMS and 4 protons from the mitochondrial matrix. This chain is Cytochrome c oxidase subunit 3 (MT-CO3), found in Oryctolagus cuniculus (Rabbit).